A 149-amino-acid chain; its full sequence is MRAVVQRVSSSKVTVDENTIGQINKGLLVLLGVTHDDKSSDVDYMIDKILNLRIFEDENDKMNLSLMDIGGELLVVSQFTLYGDCRKGRRPGFSNAARPELANNLYEEFVKKAKDKGVTVGTGQFAAHMMVELTNDGPVTILLDSSKSF.

Residues 137 to 138 carry the Gly-cisPro motif, important for rejection of L-amino acids motif; it reads GP.

It belongs to the DTD family. In terms of assembly, homodimer.

It localises to the cytoplasm. The enzyme catalyses glycyl-tRNA(Ala) + H2O = tRNA(Ala) + glycine + H(+). The catalysed reaction is a D-aminoacyl-tRNA + H2O = a tRNA + a D-alpha-amino acid + H(+). In terms of biological role, an aminoacyl-tRNA editing enzyme that deacylates mischarged D-aminoacyl-tRNAs. Also deacylates mischarged glycyl-tRNA(Ala), protecting cells against glycine mischarging by AlaRS. Acts via tRNA-based rather than protein-based catalysis; rejects L-amino acids rather than detecting D-amino acids in the active site. By recycling D-aminoacyl-tRNA to D-amino acids and free tRNA molecules, this enzyme counteracts the toxicity associated with the formation of D-aminoacyl-tRNA entities in vivo and helps enforce protein L-homochirality. In Clostridioides difficile (strain 630) (Peptoclostridium difficile), this protein is D-aminoacyl-tRNA deacylase.